The sequence spans 477 residues: Bifunctional protein HldE (477 aa).

The segment at 1 to 318 (MKVTLPEFER…ENAVRGRADT (318 aa)) is ribokinase. Lys179 carries the post-translational modification N6-acetyllysine. An ATP-binding site is contributed by 195 to 198 (NLSE). Asp264 is an active-site residue. Residues 344 to 477 (MTNGVFDILH…IKKIQQDKKG (134 aa)) are cytidylyltransferase.

It in the N-terminal section; belongs to the carbohydrate kinase PfkB family. In the C-terminal section; belongs to the cytidylyltransferase family. As to quaternary structure, homodimer.

The enzyme catalyses D-glycero-beta-D-manno-heptose 7-phosphate + ATP = D-glycero-beta-D-manno-heptose 1,7-bisphosphate + ADP + H(+). It catalyses the reaction D-glycero-beta-D-manno-heptose 1-phosphate + ATP + H(+) = ADP-D-glycero-beta-D-manno-heptose + diphosphate. It functions in the pathway nucleotide-sugar biosynthesis; ADP-L-glycero-beta-D-manno-heptose biosynthesis; ADP-L-glycero-beta-D-manno-heptose from D-glycero-beta-D-manno-heptose 7-phosphate: step 1/4. It participates in nucleotide-sugar biosynthesis; ADP-L-glycero-beta-D-manno-heptose biosynthesis; ADP-L-glycero-beta-D-manno-heptose from D-glycero-beta-D-manno-heptose 7-phosphate: step 3/4. Catalyzes the phosphorylation of D-glycero-D-manno-heptose 7-phosphate at the C-1 position to selectively form D-glycero-beta-D-manno-heptose-1,7-bisphosphate. In terms of biological role, catalyzes the ADP transfer from ATP to D-glycero-beta-D-manno-heptose 1-phosphate, yielding ADP-D-glycero-beta-D-manno-heptose. In Shigella sonnei (strain Ss046), this protein is Bifunctional protein HldE.